A 374-amino-acid polypeptide reads, in one-letter code: Dihydroorotate dehydrogenase (quinone) (374 aa).

Residues 78 to 82 and threonine 102 each bind FMN; that span reads AGFDK. Lysine 82 is a binding site for substrate. Residue 127 to 131 participates in substrate binding; that stretch reads NRMGF. Asparagine 159 and asparagine 192 together coordinate FMN. Asparagine 192 is a binding site for substrate. Residue serine 195 is the Nucleophile of the active site. Position 197 (asparagine 197) interacts with substrate. Positions 230 and 258 each coordinate FMN. 259 to 260 is a substrate binding site; that stretch reads NT. Residues glycine 287, glycine 316, and 337–338 each bind FMN; that span reads YT.

It belongs to the dihydroorotate dehydrogenase family. Type 2 subfamily. In terms of assembly, monomer. It depends on FMN as a cofactor.

It localises to the cell membrane. The catalysed reaction is (S)-dihydroorotate + a quinone = orotate + a quinol. The protein operates within pyrimidine metabolism; UMP biosynthesis via de novo pathway; orotate from (S)-dihydroorotate (quinone route): step 1/1. Its function is as follows. Catalyzes the conversion of dihydroorotate to orotate with quinone as electron acceptor. This is Dihydroorotate dehydrogenase (quinone) from Acaryochloris marina (strain MBIC 11017).